Here is a 429-residue protein sequence, read N- to C-terminus: MSLNNARPLLGCIADDFTGATDLANMLVRGGMRTVQSIGIPSAEMAAGLDADAIVIALKSRTTPSADAVAESLAALEWLRERGCEQIFFKYCSTFDSTAAGNIGQVSEALLEQLDSDFTLACPAFPENGRTIFRGHLFVQDQLLSESGMQNHPLTPMTDANLVRVLQAQTRHKVGLLRYDSIAQGVEGVRNRIAELRAEGVSMAIADALSDADLYTLGEACADLPLLTGGSGLALGLPGNFRKAGKLRDIDAAKQVAISGGEVVLAGSASVATNGQVAAWLEDNRPALRINPLDLAAGKPVVEQALTFARDAGQTVLIYATSTPDEVKAVQKELGVERSGAMVEAALGEIAKGLLNAGVRRFVVAGGETSGAVVQALGVQLLQIGAQIDPGVPATVSSGAQPLALALKSGNFGARDFFAKALKQLAGAA.

ATP is bound by residues Ser268, 366 to 369 (GGET), and Gly410.

Belongs to the four-carbon acid sugar kinase family.

The enzyme catalyses 3-dehydro-L-erythronate + ATP = 3-dehydro-4-O-phospho-L-erythronate + ADP + H(+). It carries out the reaction 3-dehydro-D-erythronate + ATP = 3-dehydro-4-O-phospho-D-erythronate + ADP + H(+). In terms of biological role, catalyzes the ATP-dependent phosphorylation of 3-oxo-tetronate to 3-oxo-tetronate 4-phosphate. The polypeptide is 3-oxo-tetronate kinase (Pseudomonas savastanoi pv. phaseolicola (strain 1448A / Race 6) (Pseudomonas syringae pv. phaseolicola (strain 1448A / Race 6))).